We begin with the raw amino-acid sequence, 505 residues long: MKDTEKYLIHANIAADGVVERSDVVGAVFGQTEGLLGDELDLRDLQESSRVGRIDVAVESENGQSFGEVTVASSLDKVETAILAAALETIDRIGPCHASVEVTSIEDVRAAKRREVVERAKELVAGGFEETSLASDDILDEVREAARVEGIVDYEGLPAGPRVGDSDAVIVVEGRADVLTLLECGIKNAVAVEGTNVPDAVADLTADRTVTAFLDGDRGGELILRELAQVGDVDYVAFAPPGESVEDLDRNTVFEALRGKVPYSSLADEPNLREAATDDSGSAPIDNEGRGRSGEMSEPSESETESERASDGGDDGDAGVVAGGARSATDRGLVDAVEDTPAPAATDAGEVDEVGEDREGDMESDSDTADINDAEFDDRAADDPNLDEAADAESVEETDAPLDNEPRSIEEHVQEIVDAGSDRARLLGDDRGVLAEIDAVDAFDAIEDAETAPHTVVVDGLIDQRLLDVAAQRGVSELLGREVGEFVKRPVGTRVLTVGDLRTGS.

The Toprim domain maps to 167–241; that stretch reads DAVIVVEGRA…DVDYVAFAPP (75 aa). 3 residues coordinate Mg(2+): Glu173, Asp215, and Asp217. Residues 268 to 410 form a disordered region; sequence DEPNLREAAT…PLDNEPRSIE (143 aa). Residues 318–327 are compositionally biased toward low complexity; it reads AGVVAGGARS. 2 stretches are compositionally biased toward acidic residues: residues 349 to 376 and 384 to 402; these read GEVD…DAEF and PNLD…DAPL.

It belongs to the archaeal DnaG primase family. Forms a ternary complex with MCM helicase and DNA. Mg(2+) is required as a cofactor.

It catalyses the reaction ssDNA + n NTP = ssDNA/pppN(pN)n-1 hybrid + (n-1) diphosphate.. Functionally, RNA polymerase that catalyzes the synthesis of short RNA molecules used as primers for DNA polymerase during DNA replication. This is DNA primase DnaG from Halorubrum lacusprofundi (strain ATCC 49239 / DSM 5036 / JCM 8891 / ACAM 34).